The primary structure comprises 329 residues: Phosphate acyltransferase (329 aa).

Belongs to the PlsX family. Homodimer. Probably interacts with PlsY.

It is found in the cytoplasm. The enzyme catalyses a fatty acyl-[ACP] + phosphate = an acyl phosphate + holo-[ACP]. It functions in the pathway lipid metabolism; phospholipid metabolism. In terms of biological role, catalyzes the reversible formation of acyl-phosphate (acyl-PO(4)) from acyl-[acyl-carrier-protein] (acyl-ACP). This enzyme utilizes acyl-ACP as fatty acyl donor, but not acyl-CoA. The chain is Phosphate acyltransferase from Campylobacter concisus (strain 13826).